The chain runs to 338 residues: Lipoate-protein ligase A (338 aa).

The 188-residue stretch at 29–216 (DPNQRVLFLW…AFFAHYGARV (188 aa)) folds into the BPL/LPL catalytic domain. Residues arginine 71, 76–79 (GAVF), and lysine 134 each bind ATP. Lysine 134 serves as a coordination point for (R)-lipoate.

Belongs to the LplA family. Monomer.

Its subcellular location is the cytoplasm. It catalyses the reaction L-lysyl-[lipoyl-carrier protein] + (R)-lipoate + ATP = N(6)-[(R)-lipoyl]-L-lysyl-[lipoyl-carrier protein] + AMP + diphosphate + H(+). It functions in the pathway protein modification; protein lipoylation via exogenous pathway; protein N(6)-(lipoyl)lysine from lipoate: step 1/2. The protein operates within protein modification; protein lipoylation via exogenous pathway; protein N(6)-(lipoyl)lysine from lipoate: step 2/2. Functionally, catalyzes both the ATP-dependent activation of exogenously supplied lipoate to lipoyl-AMP and the transfer of the activated lipoyl onto the lipoyl domains of lipoate-dependent enzymes. This is Lipoate-protein ligase A from Aeromonas salmonicida (strain A449).